We begin with the raw amino-acid sequence, 547 residues long: Natural resistance-associated macrophage protein 1 (547 aa).

A disordered region spans residues 1–30 (MTGDKDPQSVSRPNYGSISHPPSSEPQQEP). Over 1-54 (MTGDKDPQSVSRPNYGSISHPPSSEPQQEPLRTTYLSEKIPIPDTEPGTFSLRK) the chain is Cytoplasmic. The segment covering 8 to 17 (QSVSRPNYGS) has biased composition (polar residues). Residues 21-30 (PPSSEPQQEP) are compositionally biased toward low complexity. A helical transmembrane segment spans residues 55-75 (LWAFTGPGFLMSIAFLDPGNI). The Extracellular portion of the chain corresponds to 76–81 (ESDLQA). The helical transmembrane segment at 82 to 102 (GAVAGFKLLWVLLWATVLGLL) threads the bilayer. Topologically, residues 103–139 (CQRLAARLGVVTGKDLGEICHLYYPKVPRTLLWLTIE) are cytoplasmic. Residues 140–160 (LAIVGSDMQEVIGTAIAFSLL) traverse the membrane as a helical segment. The Extracellular segment spans residues 161–164 (SAGR). The chain crosses the membrane as a helical span at residues 165–185 (IPLWGGVLITIVDTFFFLFLD). The Cytoplasmic portion of the chain corresponds to 186-193 (NYGLRKLE). The helical transmembrane segment at 194-214 (AFFGILITIMALTFGYEYVVA) threads the bilayer. Residues 215–240 (RPAQVALLQGLLLPSCPGCGRPELLQ) lie on the Extracellular side of the membrane. A helical membrane pass occupies residues 241-261 (AVGIVGAIIMPHNIYLHSALV). Topologically, residues 262-286 (KSREIDRSRRPDIREANMYFLIEAS) are cytoplasmic. The helical transmembrane segment at 287-307 (IALSVSFFINLFVVAVFGQAF) threads the bilayer. At 308 to 346 (YQQTNEAAFNVCANSSLHDYAKIFPRNNLTVEVDIYQGG) the chain is on the extracellular side. 2 N-linked (GlcNAc...) asparagine glycosylation sites follow: N321 and N335. A helical transmembrane segment spans residues 347–367 (VMLGCVFGPAALYIWAVGLLA). Topologically, residues 368–394 (AGQSSTMTGTYAGQFVMEGFLRLRWSR) are cytoplasmic. A helical membrane pass occupies residues 395 to 415 (FARVLLTRSCAILPTVLVVVF). Residues 416–432 (RDLKDLSGLNDLLNVLQ) lie on the Extracellular side of the membrane. Residues 433-453 (SLLLPFAVLPILTFTSMPALM) form a helical membrane-spanning segment. Topologically, residues 454-464 (QEFANGRLSKA) are cytoplasmic. Residues 465–485 (ITSFIMALVCAINLYFVVIYL) traverse the membrane as a helical segment. Topologically, residues 486-492 (PSLPHPA) are extracellular. Residues 493 to 513 (YFILVALLAIVYLGLTTYLVW) form a helical membrane-spanning segment. Topologically, residues 514-547 (TCFIAHGVTLLAHSSHQHFLYGLPDVEEKGKISG) are cytoplasmic.

Belongs to the NRAMP family.

It localises to the late endosome membrane. It is found in the lysosome membrane. The catalysed reaction is Zn(2+)(in) + H(+)(out) = Zn(2+)(out) + H(+)(in). It catalyses the reaction Fe(2+)(in) + H(+)(out) = Fe(2+)(out) + H(+)(in). The enzyme catalyses Mn(2+)(in) + H(+)(out) = Mn(2+)(out) + H(+)(in). Its function is as follows. Macrophage-specific antiporter that fluxes metal ions in either direction against a proton gradient. Localized to late endosomal lysosomal membranes, delivers bivalent cations from the cytosol into these acidic compartments where they may directly affect antimicrobial activity. Involved in iron metabolism and host natural resistance to infection with intracellular parasites. Pathogen resistance involves sequestration of Fe(2+) and Mn(2+), cofactors of both prokaryotic and eukaryotic catalases and superoxide dismutases, not only to protect the macrophage against its own generation of reactive oxygen species, but to deny the cations to the pathogen for synthesis of its protective enzymes. This is Natural resistance-associated macrophage protein 1 (SLC11A1) from Canis lupus familiaris (Dog).